The sequence spans 341 residues: Ribosomal RNA small subunit methyltransferase H (341 aa).

S-adenosyl-L-methionine contacts are provided by residues 47 to 49, aspartate 64, phenylalanine 97, aspartate 109, and glutamine 116; that span reads GGY.

Belongs to the methyltransferase superfamily. RsmH family.

The protein resides in the cytoplasm. The enzyme catalyses cytidine(1402) in 16S rRNA + S-adenosyl-L-methionine = N(4)-methylcytidine(1402) in 16S rRNA + S-adenosyl-L-homocysteine + H(+). Functionally, specifically methylates the N4 position of cytidine in position 1402 (C1402) of 16S rRNA. This is Ribosomal RNA small subunit methyltransferase H from Allorhizobium ampelinum (strain ATCC BAA-846 / DSM 112012 / S4) (Agrobacterium vitis (strain S4)).